The sequence spans 336 residues: Isethionate-binding periplasmic protein DctP (336 aa).

The N-terminal stretch at 1-23 is a signal peptide; that stretch reads MKHLLKAGALVALACIVTLTAGA.

This sequence belongs to the bacterial solute-binding protein 7 family. As to quaternary structure, the complex comprises the periplasmic solute receptor protein DctP, and the fused transmembrane protein DctMQ.

Its subcellular location is the periplasm. It catalyses the reaction 2-hydroxyethane-1-sulfonate(out) + Na(+)(out) = 2-hydroxyethane-1-sulfonate(in) + Na(+)(in). The protein operates within organosulfur degradation; alkanesulfonate degradation. Functionally, part of the tripartite ATP-independent periplasmic (TRAP) transport system DctPQM involved in the uptake of isethionate (2-hydroxyethanesulfonate), which is then catabolized by enzymes encoded by adjacent genes in the locus. The DctP subunit is the solute-binding protein. Thereby is involved in an anaerobic respiration pathway that converts the sulfonate isethionate to ammonia, acetate and sulfide. In Oleidesulfovibrio alaskensis (strain ATCC BAA-1058 / DSM 17464 / G20) (Desulfovibrio alaskensis), this protein is Isethionate-binding periplasmic protein DctP.